A 205-amino-acid chain; its full sequence is Molybdenum cofactor guanylyltransferase (205 aa).

GTP is bound by residues 14-16 (LAG), lysine 27, aspartate 77, and aspartate 107. Aspartate 107 is a Mg(2+) binding site.

This sequence belongs to the MobA family. In terms of assembly, monomer. The cofactor is Mg(2+).

Its subcellular location is the cytoplasm. The enzyme catalyses Mo-molybdopterin + GTP + H(+) = Mo-molybdopterin guanine dinucleotide + diphosphate. In terms of biological role, transfers a GMP moiety from GTP to Mo-molybdopterin (Mo-MPT) cofactor (Moco or molybdenum cofactor) to form Mo-molybdopterin guanine dinucleotide (Mo-MGD) cofactor. The polypeptide is Molybdenum cofactor guanylyltransferase (Burkholderia vietnamiensis (strain G4 / LMG 22486) (Burkholderia cepacia (strain R1808))).